We begin with the raw amino-acid sequence, 957 residues long: Serine-aspartate repeat-containing protein C (957 aa).

Positions 1 to 50 are cleaved as a signal peptide; the sequence is MNNKKTVTNRKGMIPNRLNKFSIRKYSVGTASILVGTTLIFGLSGHEAKA. Positions 51-166 are disordered; it reads AEHTNGELNQ…TPKTTTIKPR (116 aa). The ligand binding A region stretch occupies residues 51–495; it reads AEHTNGELNQ…GSSTANGDQK (445 aa). Residues 56–71 show a composition bias toward polar residues; sequence GELNQSKNETTAPSEN. Residues 72–83 are compositionally biased toward basic and acidic residues; sequence KTTEKVDSRQLK. Residues 84 to 114 are compositionally biased toward polar residues; sequence DNTQTATADQPKVTMSDSATVKETSSNMQSP. Residues 115-132 show a composition bias toward low complexity; the sequence is QNATASQSTTQTSNVTTN. The segment covering 133–164 has biased composition (polar residues); it reads DKSSTTYSNETDKSNLTQAKDVSATPKTTTIK. CNA-B domains lie at 496–606 and 607–717; these read KYNL…YKTP and KYSL…EEET. The disordered stretch occupies residues 678-937; the sequence is TQTGTNTTED…NNSNNGTLFG (260 aa). 2 stretches are compositionally biased toward acidic residues: residues 685–695 and 712–896; these read TEDDKDADGGE and YYEE…DSDS. The LPXTG sorting signal signature appears at 920-924; that stretch reads LPETG. Low complexity predominate over residues 922–937; that stretch reads ETGSENNNSNNGTLFG. The residue at position 923 (threonine 923) is a Pentaglycyl murein peptidoglycan amidated threonine. A propeptide spans 924–957 (removed by sortase); the sequence is GSENNNSNNGTLFGGLFAALGSLLLFGRRKKQNK.

Belongs to the serine-aspartate repeat-containing protein (SDr) family. Homodimerizes; via N2-Domain. Interacts with host NRXN1; this interaction mediates bacterial attachment to host cells.

Its subcellular location is the secreted. It localises to the cell wall. Functionally, cell surface-associated calcium-binding protein which plays an important role in adhesion and pathogenesis. Mediates interactions with components of the extracellular matrix such as host NRXN1 to promote bacterial adhesion. The polypeptide is Serine-aspartate repeat-containing protein C (sdrC) (Staphylococcus aureus (strain MSSA476)).